The sequence spans 259 residues: Hydroxyethylthiazole kinase (259 aa).

Met-37 lines the substrate pocket. Arg-113 and Thr-158 together coordinate ATP. Residue Gly-185 coordinates substrate.

It belongs to the Thz kinase family. The cofactor is Mg(2+).

It carries out the reaction 5-(2-hydroxyethyl)-4-methylthiazole + ATP = 4-methyl-5-(2-phosphooxyethyl)-thiazole + ADP + H(+). The protein operates within cofactor biosynthesis; thiamine diphosphate biosynthesis; 4-methyl-5-(2-phosphoethyl)-thiazole from 5-(2-hydroxyethyl)-4-methylthiazole: step 1/1. Functionally, catalyzes the phosphorylation of the hydroxyl group of 4-methyl-5-beta-hydroxyethylthiazole (THZ). The sequence is that of Hydroxyethylthiazole kinase from Helicobacter pylori (strain Shi470).